The following is a 662-amino-acid chain: uncharacterized protein (662 aa).

This is an uncharacterized protein from Ictalurid herpesvirus 1 (strain Auburn) (IcHV-1).